A 386-amino-acid polypeptide reads, in one-letter code: Lipoyl synthase, mitochondrial (386 aa).

[4Fe-4S] cluster is bound by residues Cys110, Cys115, Cys121, Cys141, Cys145, Cys148, and Ser356. The Radical SAM core domain maps to 124 to 345 (GNDKSKATAT…KEQALEMGFL (222 aa)).

The protein belongs to the radical SAM superfamily. Lipoyl synthase family. The cofactor is [4Fe-4S] cluster.

It localises to the mitochondrion. The enzyme catalyses [[Fe-S] cluster scaffold protein carrying a second [4Fe-4S](2+) cluster] + N(6)-octanoyl-L-lysyl-[protein] + 2 oxidized [2Fe-2S]-[ferredoxin] + 2 S-adenosyl-L-methionine + 4 H(+) = [[Fe-S] cluster scaffold protein] + N(6)-[(R)-dihydrolipoyl]-L-lysyl-[protein] + 4 Fe(3+) + 2 hydrogen sulfide + 2 5'-deoxyadenosine + 2 L-methionine + 2 reduced [2Fe-2S]-[ferredoxin]. The protein operates within protein modification; protein lipoylation via endogenous pathway; protein N(6)-(lipoyl)lysine from octanoyl-[acyl-carrier-protein]: step 2/2. Its function is as follows. Catalyzes the radical-mediated insertion of two sulfur atoms into the C-6 and C-8 positions of the octanoyl moiety bound to the lipoyl domains of lipoate-dependent enzymes, thereby converting the octanoylated domains into lipoylated derivatives. The sequence is that of Lipoyl synthase, mitochondrial from Zygosaccharomyces rouxii (strain ATCC 2623 / CBS 732 / NBRC 1130 / NCYC 568 / NRRL Y-229).